The sequence spans 671 residues: APC membrane recruitment protein 2 (671 aa).

4 disordered regions span residues 1–24, 76–358, 391–414, and 444–598; these read METS…ASVG, SGGT…SDPS, EAGP…KNPG, and SQTE…PLRT. 2 stretches are compositionally biased toward gly residues: residues 7 to 21 and 126 to 137; these read RGGG…GAGA and GGDSGGGGGGRP. Serine 162 carries the phosphoserine modification. Residues 171–182 are compositionally biased toward basic and acidic residues; the sequence is GRSENGKGEPVD. Serine 229 and serine 233 each carry phosphoserine. Composition is skewed to basic and acidic residues over residues 236–260, 276–286, and 295–307; these read CVKE…RDPA, APARSCREAEG, and ARGE…RRAE. The span at 342–353 shows a compositional bias: low complexity; sequence APAAPDPASVDP. 2 positions are modified to phosphoserine: serine 355 and serine 358. Positions 447–458 are enriched in low complexity; it reads EEQGPEPQEGAA. Basic and acidic residues-rich tracts occupy residues 472-487 and 498-514; these read TPKD…DASS and IEPH…KEQQ.

The protein belongs to the Amer family. As to quaternary structure, interacts with APC.

The protein resides in the cell membrane. In terms of biological role, negative regulator of the canonical Wnt signaling pathway involved in neuroectodermal patterning. Acts by specifically binding phosphatidylinositol 4,5-bisphosphate (PtdIns(4,5)P2), translocating to the cell membrane and interacting with key regulators of the canonical Wnt signaling pathway, such as components of the beta-catenin destruction complex. This Homo sapiens (Human) protein is APC membrane recruitment protein 2 (AMER2).